Reading from the N-terminus, the 402-residue chain is Potassium channel subfamily K member 9 (402 aa).

Residues 1 to 8 (MKRQNVRT) lie on the Cytoplasmic side of the membrane. A helical membrane pass occupies residues 9–29 (LSLIACTFTYLLVGAAVFDAL). Topologically, residues 30 to 88 (ESDHEMREEEKLKAEEVRLRGKYNISSDDYQQLELVILQSEPHRAGVQWKFAGSFYFAI) are extracellular. N-linked (GlcNAc...) asparagine glycosylation is present at asparagine 53. Positions 89–101 (TVITTIGYGHAAP) form an intramembrane region, pore-forming. K(+) contacts are provided by threonine 93, isoleucine 94, glycine 95, and tyrosine 96. Residues 93 to 98 (TIGYGH) are selectivity filter 1. At 102-107 (GTDAGK) the chain is on the extracellular side. The helical transmembrane segment at 108–128 (AFCMFYAVLGIPLTLVMFQSL) threads the bilayer. The Cytoplasmic segment spans residues 129 to 158 (GERMNTFVRYLLKRIKKCCGMRNTEVSMEN). A helical membrane pass occupies residues 159 to 179 (MVTVGFFSCMGTLCLGAAAFS). Residues 180 to 194 (QCEDWSFFHAYYYCF) are Extracellular-facing. Positions 195–207 (ITLTTIGFGDFVA) form an intramembrane region, pore-forming. Threonine 199, isoleucine 200, glycine 201, and phenylalanine 202 together coordinate K(+). The interval 199–204 (TIGFGD) is selectivity filter 2. Residues 208 to 218 (LQAKGALQRKP) lie on the Extracellular side of the membrane. A helical membrane pass occupies residues 219 to 239 (FYVAFSFMYILVGLTVIGAFL). Residues 240-402 (NLVVLRFLTM…HRLHLRRKSI (163 aa)) lie on the Cytoplasmic side of the membrane. The segment at 243–248 (VLRFLT) is X-gate.

Belongs to the two pore domain potassium channel (TC 1.A.1.8) family. As to quaternary structure, homodimer. Heterodimer with KCNK1. Heterodimer with KCNK3. In terms of tissue distribution, expressed in adrenal glands mainly in outer zona glomerulosa and inner zona medullaris. Expressed in retinal ganglion cells. Expressed in dentate gyrus (at protein level).

The protein localises to the cell membrane. Its subcellular location is the mitochondrion inner membrane. The protein resides in the cell projection. It is found in the dendrite. The catalysed reaction is K(+)(in) = K(+)(out). It catalyses the reaction Na(+)(in) = Na(+)(out). Its activity is regulated as follows. Inhibited by NTS:NTSR1 signaling in dentate gyrus granule cells. In terms of biological role, k(+) channel that conducts voltage-dependent outward rectifying currents upon membrane depolarization. Voltage sensing is coupled to K(+) electrochemical gradient in an 'ion flux gating' mode where outward but not inward ion flow opens the gate. Changes ion selectivity and becomes permeable to Na(+) ions in response to extracellular acidification. Protonation of the pH sensor His-98 stabilizes C-type inactivation conformation likely converting the channel from outward K(+)-conducting, to inward Na(+)-conducting to nonconductive state. Homo- and heterodimerizes to form functional channels with distinct regulatory and gating properties. Allows K(+) currents with fast-gating kinetics important for the repolarization and hyperpolarization phases of action potentials. In granule neurons, hyperpolarizes the resting membrane potential to limit intrinsic neuronal excitability, but once the action potential threshold is reached, supports high-frequency action potential firing and increased neuronal excitability. Homomeric and/or heteromeric KCNK3:KCNK9 channels operate in cerebellar granule cells, whereas heteromeric KCNK1:KCNK9 enables currents in hippocampal dentate gyrus granule neurons. Dispensable for central chemosensory respiration i.e. breathing controlled by brainstem CO2/pH, it rather conducts pH-sensitive currents and controls the firing rate of serotonergic raphe neurons involved in potentiation of the respiratory chemoreflex. In retinal ganglion cells, mediates outward rectifying currents that regulate action potentials in response to acidification of the synaptic cleft. Involved in transmission of image-forming and nonimage-forming visual information in the retina. In adrenal gland, contributes to the maintenance of a hyperpolarized resting membrane potential of aldosterone-producing cells at zona glomerulosa and limits aldosterone release as part of a regulatory mechanism that controls arterial blood pressure and electrolyte homeostasis. The sequence is that of Potassium channel subfamily K member 9 from Mus musculus (Mouse).